The primary structure comprises 807 residues: Ribosome-releasing factor 2, mitochondrial (807 aa).

A mitochondrion-targeting transit peptide spans Met1–Tyr18. The region spanning Ala27–Leu315 is the tr-type G domain. GTP-binding positions include Ala36–Thr43, Asp100–His104, and Asn154–Asp157.

The protein belongs to the TRAFAC class translation factor GTPase superfamily. Classic translation factor GTPase family. EF-G/EF-2 subfamily.

Its subcellular location is the mitochondrion. Its function is as follows. Mitochondrial GTPase that mediates the disassembly of ribosomes from messenger RNA at the termination of mitochondrial protein biosynthesis. Not involved in the GTP-dependent ribosomal translocation step during translation elongation. The protein is Ribosome-releasing factor 2, mitochondrial of Candida albicans (strain SC5314 / ATCC MYA-2876) (Yeast).